A 386-amino-acid chain; its full sequence is GLABROUS1 enhancer-binding protein-like 1 (386 aa).

Disordered stretches follow at residues 1–58 (MVTP…KKKK) and 197–314 (ESGE…DDDD). Residues 216–226 (EEIRDNDETAR) show a composition bias toward basic and acidic residues. Positions 221 to 285 (NDETARKAQQ…LKEHEEVANT (65 aa)) form a coiled coil. Polar residues predominate over residues 257-267 (DNNGTTQIAQQ). Low complexity predominate over residues 291–300 (NGAAKTTENG). The segment at 354 to 375 (LSDEWKALCVEERRLNIKKLRF) is non-canonical leucine-zipper.

This sequence belongs to the GeBP family. As to quaternary structure, homo- and heterodimers. Interacts with GEBP, GPL2 and GPL3. Interacts with GEBP. In terms of tissue distribution, expressed in the apical meristem and young leaf primordia. Detected in the vascular tissues of cotyledons and leaves, in hydathodes and at the base of flowers and siliques, but not in roots.

The protein localises to the nucleus. In terms of biological role, probable transcription factor. May play redundant roles with GEBP and GPL2 in cytokinin responses by regulating the transcript levels of type-A ARR response genes. Involved in stress responses. Plays a repressive role in cell expansion by counteracting the positive role of CPR5 in this process, but does not regulate cell proliferation or endoreduplication. This chain is GLABROUS1 enhancer-binding protein-like 1, found in Arabidopsis thaliana (Mouse-ear cress).